A 368-amino-acid polypeptide reads, in one-letter code: Probable dual-specificity RNA methyltransferase RlmN (368 aa).

The active-site Proton acceptor is the E109. Residues 115-355 (YPDRVTMCIS…VTVRDTRGQE (241 aa)) enclose the Radical SAM core domain. Cysteines 122 and 360 form a disulfide. Positions 129, 133, and 136 each coordinate [4Fe-4S] cluster. S-adenosyl-L-methionine-binding positions include 184–185 (GE), S218, 241–243 (SLH), and N317. Residue C360 is the S-methylcysteine intermediate of the active site.

It belongs to the radical SAM superfamily. RlmN family. [4Fe-4S] cluster serves as cofactor.

It localises to the cytoplasm. The catalysed reaction is adenosine(2503) in 23S rRNA + 2 reduced [2Fe-2S]-[ferredoxin] + 2 S-adenosyl-L-methionine = 2-methyladenosine(2503) in 23S rRNA + 5'-deoxyadenosine + L-methionine + 2 oxidized [2Fe-2S]-[ferredoxin] + S-adenosyl-L-homocysteine. It catalyses the reaction adenosine(37) in tRNA + 2 reduced [2Fe-2S]-[ferredoxin] + 2 S-adenosyl-L-methionine = 2-methyladenosine(37) in tRNA + 5'-deoxyadenosine + L-methionine + 2 oxidized [2Fe-2S]-[ferredoxin] + S-adenosyl-L-homocysteine. In terms of biological role, specifically methylates position 2 of adenine 2503 in 23S rRNA and position 2 of adenine 37 in tRNAs. In Streptomyces griseus subsp. griseus (strain JCM 4626 / CBS 651.72 / NBRC 13350 / KCC S-0626 / ISP 5235), this protein is Probable dual-specificity RNA methyltransferase RlmN.